A 252-amino-acid chain; its full sequence is Probable NADP-dependent dehydrogenase HI_1430 (252 aa).

An NADP(+)-binding site is contributed by 7 to 31 (LVTGATAGFGLAICKKLIEAGYKVI). Ser-137 serves as a coordination point for substrate. Tyr-150 functions as the Proton acceptor in the catalytic mechanism.

It belongs to the short-chain dehydrogenases/reductases (SDR) family.

The polypeptide is Probable NADP-dependent dehydrogenase HI_1430 (Haemophilus influenzae (strain ATCC 51907 / DSM 11121 / KW20 / Rd)).